The chain runs to 442 residues: 3-phosphoshikimate 1-carboxyvinyltransferase (442 aa).

3-phosphoshikimate is bound by residues K25, S26, and R30. K25 is a binding site for phosphoenolpyruvate. Phosphoenolpyruvate is bound by residues G97 and R125. Residues S170, Q172, D323, and K350 each contribute to the 3-phosphoshikimate site. Residue Q172 participates in phosphoenolpyruvate binding. Catalysis depends on D323, which acts as the Proton acceptor. The phosphoenolpyruvate site is built by R354 and R399.

This sequence belongs to the EPSP synthase family. As to quaternary structure, monomer.

Its subcellular location is the cytoplasm. It carries out the reaction 3-phosphoshikimate + phosphoenolpyruvate = 5-O-(1-carboxyvinyl)-3-phosphoshikimate + phosphate. It functions in the pathway metabolic intermediate biosynthesis; chorismate biosynthesis; chorismate from D-erythrose 4-phosphate and phosphoenolpyruvate: step 6/7. Catalyzes the transfer of the enolpyruvyl moiety of phosphoenolpyruvate (PEP) to the 5-hydroxyl of shikimate-3-phosphate (S3P) to produce enolpyruvyl shikimate-3-phosphate and inorganic phosphate. The sequence is that of 3-phosphoshikimate 1-carboxyvinyltransferase from Bartonella quintana (strain Toulouse) (Rochalimaea quintana).